The sequence spans 277 residues: Large ribosomal subunit protein uL2 (277 aa).

The disordered stretch occupies residues 223 to 277 (VVMNPIDHPHGGGEGRTSGGRHPVTPWGKPTKGKKTRSNKSTNKFILISRHKRKK).

This sequence belongs to the universal ribosomal protein uL2 family. In terms of assembly, part of the 50S ribosomal subunit. Forms a bridge to the 30S subunit in the 70S ribosome.

Functionally, one of the primary rRNA binding proteins. Required for association of the 30S and 50S subunits to form the 70S ribosome, for tRNA binding and peptide bond formation. It has been suggested to have peptidyltransferase activity; this is somewhat controversial. Makes several contacts with the 16S rRNA in the 70S ribosome. The sequence is that of Large ribosomal subunit protein uL2 from Nitrobacter hamburgensis (strain DSM 10229 / NCIMB 13809 / X14).